Reading from the N-terminus, the 128-residue chain is Iron-sulfur cluster insertion protein ErpA (128 aa).

3 residues coordinate iron-sulfur cluster: C56, C120, and C122.

The protein belongs to the HesB/IscA family. As to quaternary structure, homodimer. It depends on iron-sulfur cluster as a cofactor.

Its function is as follows. Required for insertion of 4Fe-4S clusters for at least IspG. This Xanthomonas oryzae pv. oryzae (strain MAFF 311018) protein is Iron-sulfur cluster insertion protein ErpA.